Reading from the N-terminus, the 189-residue chain is Elongation factor P (189 aa).

Lys-34 is subject to N6-(3,6-diaminohexanoyl)-5-hydroxylysine.

Belongs to the elongation factor P family. May be beta-lysylated on the epsilon-amino group of Lys-34 by the combined action of EpmA and EpmB, and then hydroxylated on the C5 position of the same residue by EpmC (if this protein is present). Lysylation is critical for the stimulatory effect of EF-P on peptide-bond formation. The lysylation moiety may extend toward the peptidyltransferase center and stabilize the terminal 3-CCA end of the tRNA. Hydroxylation of the C5 position on Lys-34 may allow additional potential stabilizing hydrogen-bond interactions with the P-tRNA.

It is found in the cytoplasm. The protein operates within protein biosynthesis; polypeptide chain elongation. Its function is as follows. Involved in peptide bond synthesis. Alleviates ribosome stalling that occurs when 3 or more consecutive Pro residues or the sequence PPG is present in a protein, possibly by augmenting the peptidyl transferase activity of the ribosome. Modification of Lys-34 is required for alleviation. The protein is Elongation factor P of Francisella tularensis subsp. novicida (strain U112).